The sequence spans 201 residues: Imidazoleglycerol-phosphate dehydratase (201 aa).

It belongs to the imidazoleglycerol-phosphate dehydratase family.

It is found in the cytoplasm. It catalyses the reaction D-erythro-1-(imidazol-4-yl)glycerol 3-phosphate = 3-(imidazol-4-yl)-2-oxopropyl phosphate + H2O. It functions in the pathway amino-acid biosynthesis; L-histidine biosynthesis; L-histidine from 5-phospho-alpha-D-ribose 1-diphosphate: step 6/9. The chain is Imidazoleglycerol-phosphate dehydratase from Methanopyrus kandleri (strain AV19 / DSM 6324 / JCM 9639 / NBRC 100938).